A 397-amino-acid polypeptide reads, in one-letter code: 2-aminoadipate transaminase (397 aa).

Gly-40 is a substrate binding site. Residues Tyr-70, 100-101 (SQ), Asn-174, 202-205 (DDAY), 235-237 (SFS), and Arg-245 each bind pyridoxal 5'-phosphate. Asn-174 contributes to the substrate binding site. An N6-(pyridoxal phosphate)lysine modification is found at Lys-263. Arg-368 lines the substrate pocket.

Belongs to the class-I pyridoxal-phosphate-dependent aminotransferase family. Homodimer. Requires pyridoxal 5'-phosphate as cofactor.

It carries out the reaction L-2-aminoadipate + 2-oxoglutarate = 2-oxoadipate + L-glutamate. The protein operates within amino-acid biosynthesis; L-lysine biosynthesis via AAA pathway; L-alpha-aminoadipate from 2-oxoglutarate: step 5/5. Functionally, catalyzes the transfer of an amino group between 2-oxoadipate (2-OA) and glutamate (Glu) to yield alpha-aminodipate (AAA). It can also transaminate glutamate, leucine, and aromatic amino acids. It also contributes in the biosynthesis of other amino acids such as leucine. This is 2-aminoadipate transaminase (lysN) from Thermus thermophilus (strain ATCC BAA-163 / DSM 7039 / HB27).